A 350-amino-acid polypeptide reads, in one-letter code: Quinone oxidoreductase-like protein 2 (350 aa).

At Lys36 the chain carries N6-acetyllysine. Lys201 is subject to N6-succinyllysine. N6-acetyllysine is present on residues Lys302 and Lys328.

It belongs to the zinc-containing alcohol dehydrogenase family. Quinone oxidoreductase subfamily.

The chain is Quinone oxidoreductase-like protein 2 from Rattus norvegicus (Rat).